The sequence spans 123 residues: uncharacterized protein (123 aa).

Residues 100 to 123 (NKQPKTTHHFSTNSSEYKSRKSKH) form a disordered region.

This is an uncharacterized protein from Acanthamoeba polyphaga mimivirus (APMV).